The primary structure comprises 137 residues: Nucleoside diphosphate kinase (137 aa).

The ATP site is built by Lys-9, Phe-57, Arg-85, Thr-91, Arg-102, and Asn-112. Catalysis depends on His-115, which acts as the Pros-phosphohistidine intermediate.

It belongs to the NDK family. In terms of assembly, homotetramer. Mg(2+) is required as a cofactor.

The protein localises to the cytoplasm. It catalyses the reaction a 2'-deoxyribonucleoside 5'-diphosphate + ATP = a 2'-deoxyribonucleoside 5'-triphosphate + ADP. The enzyme catalyses a ribonucleoside 5'-diphosphate + ATP = a ribonucleoside 5'-triphosphate + ADP. Its function is as follows. Major role in the synthesis of nucleoside triphosphates other than ATP. The ATP gamma phosphate is transferred to the NDP beta phosphate via a ping-pong mechanism, using a phosphorylated active-site intermediate. In Campylobacter curvus (strain 525.92), this protein is Nucleoside diphosphate kinase.